We begin with the raw amino-acid sequence, 1473 residues long: Actin cytoskeleton-regulatory complex protein pan1 (1473 aa).

Disordered stretches follow at residues 1–121 (MYSS…GLPV) and 134–153 (SFRG…AGSK). The segment covering 24–47 (QQPSYGQQTTQQQQQHQTGLAPQP) has biased composition (low complexity). Over residues 62–78 (LQPQPTGFSPGQLQSQM) the composition is skewed to polar residues. Residues 79–92 (TGFPQLQQQPGFQT) show a composition bias toward low complexity. Polar residues predominate over residues 93–118 (SAQPPQLTGYSIQSQAPQLQVPSSTG). Residues 166-254 (DQAKFEQLFK…EKIKNEVSSM (89 aa)) form the EH 1 domain. In terms of domain architecture, EF-hand 1 spans 198-233 (LPGSDLSKIWVLSDTTKSGQLFFPEFALAMYLCNIR). The disordered stretch occupies residues 266–366 (QPEMAFPTNA…PTGLMSNPQP (101 aa)). Residues 289 to 298 (PPAPQQPQPQ) show a composition bias toward pro residues. The segment covering 301-339 (THSQLLTQLTAQPTGFHTQPTGIQSTQASFPGQSSSLVP) has biased composition (polar residues). A compositionally biased stretch (low complexity) spans 344 to 360 (FPGQSQQQFLQTQPTGL). The EH 2 domain maps to 458–547 (EKKIYDDLFR…PELVPPSTRN (90 aa)). One can recognise an EF-hand 2 domain in the interval 491-526 (LDQKDLERIWTLADPHNRGRLNMDEFAVAMHLIYRK). Residues 609 to 645 (NDEAASGYRSSARRRVGNNGRTPSPATSQTSEEELSV) are disordered. The segment covering 627–638 (NGRTPSPATSQT) has biased composition (polar residues). Residues 678–759 (RRDRREVESL…LFRLKDAKAH (82 aa)) are a coiled coil. 3 disordered regions span residues 793-837 (AAEL…RDVE), 891-1265 (AYVR…ADVQ), and 1277-1473 (QENA…RVLD). Basic and acidic residues-rich tracts occupy residues 810–837 (AAAR…RDVE) and 893–915 (VRKE…DEAP). Low complexity predominate over residues 925–934 (TGSTGSLPGS). Composition is skewed to basic and acidic residues over residues 935-953 (THED…RIAE), 973-1005 (RQER…RLAE), 1054-1097 (AARE…RLRA), 1108-1128 (KKQE…EQEA), and 1135-1147 (AELE…ERQL). Positions 963–1163 (HNNTAETLLQ…LDEESSSDEE (201 aa)) form a coiled coil. Residues 1152–1165 (EALDEESSSDEEGP) are compositionally biased toward acidic residues. Polar residues-rich tracts occupy residues 1168–1180 (ITPQ…QSQI) and 1208–1218 (TSATSSPTSDR). A compositionally biased stretch (pro residues) spans 1402 to 1434 (PDAPPPPPPPPVPHMAPSAPPPGIPPPPAPPAA). The region spanning 1440–1457 (NRSALLASIQAGKGLRKV) is the WH2 domain.

It belongs to the PAN1 family. In terms of assembly, component of the PAN1 actin cytoskeleton-regulatory complex.

The protein resides in the cell membrane. The protein localises to the endosome membrane. Its subcellular location is the cytoplasm. It is found in the cytoskeleton. It localises to the actin patch. Component of the PAN1 actin cytoskeleton-regulatory complex required for the internalization of endosomes during actin-coupled endocytosis. The complex links the site of endocytosis to the cell membrane-associated actin cytoskeleton. Mediates uptake of external molecules and vacuolar degradation of plasma membrane proteins. Plays a role in the proper organization of the cell membrane-associated actin cytoskeleton and promotes its destabilization. The polypeptide is Actin cytoskeleton-regulatory complex protein pan1 (pan1) (Aspergillus oryzae (strain ATCC 42149 / RIB 40) (Yellow koji mold)).